The sequence spans 366 residues: BIIDXI-like protein At5g11420 (366 aa).

The first 22 residues, 1–22 (MKGGSLSFLFVLLIATITSVIC), serve as a signal peptide directing secretion. Residues Asn98, Asn122, and Asn209 are each glycosylated (N-linked (GlcNAc...) asparagine).

Interacts with PME3.

Its subcellular location is the secreted. It is found in the cell wall. In terms of biological role, together with BIIDXI, acts as a positive regulator of PME3 activity during several developmental processes, including seed germination and endosperm (testa) rupture at the micropyle, probably by modulating the pectin status in cell walls. The chain is BIIDXI-like protein At5g11420 from Arabidopsis thaliana (Mouse-ear cress).